Reading from the N-terminus, the 153-residue chain is MATASAMAGPSSETTSEEQLITQEPKEANSTTSQKQSKQRKRGRHGPRRCHSNCRGDSFATYFRRVLKQVHQGLSLSREAVSVMDSLVHDILDRIATEAGHLARSTKRQTITAWETRMAVRLLLPGQMGKLAESEGTKAVLRTSLYAIQQQRK.

The tract at residues 1 to 54 (MATASAMAGPSSETTSEEQLITQEPKEANSTTSQKQSKQRKRGRHGPRRCHSNC) is disordered. The span at 11 to 36 (SSETTSEEQLITQEPKEANSTTSQKQ) shows a compositional bias: polar residues. Basic residues predominate over residues 37–52 (SKQRKRGRHGPRRCHS).

This sequence belongs to the histone H2B family. As to quaternary structure, can replace the conventional histone H2B in the nucleosome. The nucleosome is a histone octamer containing two molecules each of H2A, H2B, H3 and H4 assembled in one H3-H4 heterotetramer and two H2A-H2B heterodimers. The octamer wraps approximately 147 bp of DNA. Testis-specific (at protein level).

Its subcellular location is the nucleus membrane. The protein localises to the chromosome. It localises to the telomere. Functionally, atypical histone H2B that can form nucleosomes structurally and dynamically indistinguishable from those containing conventional H2B. Nucleosomes wrap and compact DNA into chromatin, limiting DNA accessibility to the cellular machineries which require DNA as a template. Histones thereby play a central role in transcription regulation, DNA repair, DNA replication and chromosomal stability. DNA accessibility is regulated via a complex set of post-translational modifications of histones, also called histone code, and nucleosome remodeling. However, unlike conventional H2B, does not recruit chromosome condensation factors and does not participate in the assembly of mitotic chromosomes. May be important for telomere function and play a role in spermatogenesis. The chain is Histone H2B type W-T from Homo sapiens (Human).